A 430-amino-acid polypeptide reads, in one-letter code: MIDSLDLVIDTIVAREVLDSRGNPTVEAEVLLEGGAMGRAIVPSGASTGAHEAHELRDGGKRYMGKGVSQAVTHIEERIAPALCGLSALDQAAVDAAMLELDGSDNKSNLGANSILAVSMATARAAANGLGLPLYRYLGGPLANLLPVPLMNVINGGAHAANSLDFQEFMLVPHGAPSFREALRMGTEVFHTLKDLLNAKGMSTSVGDEGGFAPNLGNVEAGEILVEAIQKAGYKPGEQISLALDVASTEFFENGRYAFDGGSYTSAEMVGQLEQLVNQFPIVSIEDGLAEDDWEGWKLLTERLGSKVQLVGDDLFVTNTKRLQQGIDNNTANSILIKVNQIGSLTETLQAIDLAGRSGYTSVISHRSGETEDTTIADLSVATRAGQIKTGSLSRSERVAKYNQLLRIEDELGSQAVYAGAVGQGPRGKA.

Position 167 (Gln167) interacts with (2R)-2-phosphoglycerate. Residue Glu209 is the Proton donor of the active site. Mg(2+) is bound by residues Asp245, Glu286, and Asp313. Residues Lys338, Arg367, Ser368, and Lys389 each coordinate (2R)-2-phosphoglycerate. Lys338 acts as the Proton acceptor in catalysis.

It belongs to the enolase family. Mg(2+) is required as a cofactor.

It is found in the cytoplasm. Its subcellular location is the secreted. The protein localises to the cell surface. It carries out the reaction (2R)-2-phosphoglycerate = phosphoenolpyruvate + H2O. The protein operates within carbohydrate degradation; glycolysis; pyruvate from D-glyceraldehyde 3-phosphate: step 4/5. In terms of biological role, catalyzes the reversible conversion of 2-phosphoglycerate (2-PG) into phosphoenolpyruvate (PEP). It is essential for the degradation of carbohydrates via glycolysis. This Synechococcus sp. (strain CC9902) protein is Enolase.